The following is a 592-amino-acid chain: Frizzled-1 (592 aa).

The segment at 1–26 (MAERRGPAGGGSGEVGGGRRAGGDRC) is disordered. The first 48 residues, 1-48 (MAERRGPAGGGSGEVGGGRRAGGDRCPRRPPALPLLLLLWAAALPAGG), serve as a signal peptide directing secretion. A compositionally biased stretch (gly residues) spans 7-20 (PAGGGSGEVGGGRR). Topologically, residues 49-271 (QPAAQPAALS…PEELRFSRTW (223 aa)) are extracellular. Residues 65 to 184 (PDHGYCQPIS…HGAGELCVGQ (120 aa)) form the FZ domain. Intrachain disulfides connect Cys70–Cys131, Cys78–Cys124, Cys115–Cys152, Cys141–Cys181, and Cys145–Cys169. N-linked (GlcNAc...) asparagine glycosylation occurs at Asn84. An N-linked (GlcNAc...) asparagine glycan is attached at Asn185. The segment at 185-219 (NASERGTPTPALRPESWTSNPHRGGGAGGSGPGEA) is disordered. Gly residues predominate over residues 207–218 (RGGGAGGSGPGE). The helical transmembrane segment at 272-292 (IGIWSVLCCASTLFTVLTYLV) threads the bilayer. Over 293–303 (DMKRFSYPERP) the chain is Cytoplasmic. A helical membrane pass occupies residues 304–324 (IIFLSGCYTAVAVAYIAGFLL). Over 325–351 (EERVVCNERFAEDGSRTVAQGTKREGC) the chain is Extracellular. The chain crosses the membrane as a helical span at residues 352–372 (TILFMMLYFFGMASSIWWVIL). The Cytoplasmic segment spans residues 373–394 (SLTWFLAAGMKWGHEAIEANSQ). A helical membrane pass occupies residues 395-415 (YFHLAAWAVPAIKTITILALG). The Extracellular portion of the chain corresponds to 416 to 438 (QVDGDVLSGVCFVGINNVDALRG). Residues 439–459 (FVLAPLFVYLFIGTSFLLAGF) traverse the membrane as a helical segment. Residues 460–485 (VSLFRIRTIMKHDGTKTEKLEKLMVR) lie on the Cytoplasmic side of the membrane. The chain crosses the membrane as a helical span at residues 486–506 (IGIFSVLYTVPATIVIACYFY). At 507 to 546 (EQAFREQWERSWVTQSCKSYAIPCPNNHSSHHPPMSPDFT) the chain is on the extracellular side. N-linked (GlcNAc...) asparagine glycosylation occurs at Asn533. A helical membrane pass occupies residues 547–567 (VFMIKYLMTLIVGITSGFWIW). The Cytoplasmic segment spans residues 568-592 (SGKTLNSWRKFYTRLTNSKQGETTV). The Lys-Thr-X-X-X-Trp motif, mediates interaction with the PDZ domain of Dvl family members motif lies at 570–575 (KTLNSW). The short motif at 590–592 (TTV) is the PDZ-binding element.

This sequence belongs to the G-protein coupled receptor Fz/Smo family. In terms of tissue distribution, expressed in the lens, otic placode (medial wall of the vesicle) and in epibranchial placode. Also expressed in the developing somites (dermomyotome).

It is found in the cell membrane. Receptor for Wnt proteins. Functions in the canonical Wnt/beta-catenin signaling pathway. The canonical Wnt/beta-catenin signaling pathway leads to the activation of disheveled proteins, inhibition of GSK-3 kinase, nuclear accumulation of beta-catenin and activation of Wnt target genes. A second signaling pathway involving PKC and calcium fluxes has been seen for some family members, but it is not yet clear if it represents a distinct pathway or if it can be integrated in the canonical pathway, as PKC seems to be required for Wnt-mediated inactivation of GSK-3 kinase. Both pathways seem to involve interactions with G-proteins. May be involved in transduction and intercellular transmission of polarity information during tissue morphogenesis and/or in differentiated tissues. This chain is Frizzled-1 (FZD1), found in Gallus gallus (Chicken).